Here is a 93-residue protein sequence, read N- to C-terminus: Large ribosomal subunit protein bL31B (93 aa).

It belongs to the bacterial ribosomal protein bL31 family. Type B subfamily. Part of the 50S ribosomal subunit.

This is Large ribosomal subunit protein bL31B from Psychrobacter cryohalolentis (strain ATCC BAA-1226 / DSM 17306 / VKM B-2378 / K5).